A 330-amino-acid chain; its full sequence is Ketol-acid reductoisomerase (NADP(+)) (330 aa).

A KARI N-terminal Rossmann domain is found at 2 to 182; it reads ARMYYDEDAN…GGTRAGVLET (181 aa). NADP(+) contacts are provided by residues 25–28, S51, S53, and 83–86; these read YGSQ and DEVQ. Residue H108 is part of the active site. Residue G134 coordinates NADP(+). The 146-residue stretch at 183-328 folds into the KARI C-terminal knotted domain; it reads TFREETETDL…QDLRAMMSWL (146 aa). The Mg(2+) site is built by D191, E195, E227, and E231. S252 is a substrate binding site.

Belongs to the ketol-acid reductoisomerase family. Mg(2+) serves as cofactor.

It catalyses the reaction (2R)-2,3-dihydroxy-3-methylbutanoate + NADP(+) = (2S)-2-acetolactate + NADPH + H(+). The enzyme catalyses (2R,3R)-2,3-dihydroxy-3-methylpentanoate + NADP(+) = (S)-2-ethyl-2-hydroxy-3-oxobutanoate + NADPH + H(+). Its pathway is amino-acid biosynthesis; L-isoleucine biosynthesis; L-isoleucine from 2-oxobutanoate: step 2/4. It functions in the pathway amino-acid biosynthesis; L-valine biosynthesis; L-valine from pyruvate: step 2/4. Functionally, involved in the biosynthesis of branched-chain amino acids (BCAA). Catalyzes an alkyl-migration followed by a ketol-acid reduction of (S)-2-acetolactate (S2AL) to yield (R)-2,3-dihydroxy-isovalerate. In the isomerase reaction, S2AL is rearranged via a Mg-dependent methyl migration to produce 3-hydroxy-3-methyl-2-ketobutyrate (HMKB). In the reductase reaction, this 2-ketoacid undergoes a metal-dependent reduction by NADPH to yield (R)-2,3-dihydroxy-isovalerate. The sequence is that of Ketol-acid reductoisomerase (NADP(+)) from Microcystis aeruginosa (strain NIES-843 / IAM M-2473).